We begin with the raw amino-acid sequence, 469 residues long: GTPase Der (469 aa).

EngA-type G domains are found at residues 30–193 (PVLA…PEVA) and 203–376 (RRVA…ASWD). GTP contacts are provided by residues 36 to 43 (GRPNVGKS), 83 to 87 (DTGGW), 145 to 148 (NKVD), 209 to 216 (GKPNVGKS), 256 to 260 (DTAGL), and 321 to 324 (NKWD). The KH-like domain occupies 377–459 (TRIPTGPLNS…PIRINVRVRE (83 aa)).

The protein belongs to the TRAFAC class TrmE-Era-EngA-EngB-Septin-like GTPase superfamily. EngA (Der) GTPase family. In terms of assembly, associates with the 50S ribosomal subunit.

Its function is as follows. GTPase that plays an essential role in the late steps of ribosome biogenesis. The protein is GTPase Der of Mycobacterium marinum (strain ATCC BAA-535 / M).